Consider the following 471-residue polypeptide: Cytochrome P450 monooxygenase afvE (471 aa).

The chain crosses the membrane as a helical span at residues Ile-265 to Tyr-285. Cys-410 lines the heme pocket.

The protein belongs to the cytochrome P450 family. The cofactor is heme.

The protein localises to the membrane. It functions in the pathway secondary metabolite biosynthesis. Functionally, cytochrome P450 monooxygenase; part of the gene cluster that mediates the biosynthesis of aflavarin, a bicoumarin that exhibits anti-insectan activity against the fungivorous beetle C.hemipterus. The protein is Cytochrome P450 monooxygenase afvE of Aspergillus flavus (strain ATCC 200026 / FGSC A1120 / IAM 13836 / NRRL 3357 / JCM 12722 / SRRC 167).